A 1183-amino-acid polypeptide reads, in one-letter code: DNA-directed RNA polymerase subunit beta (1183 aa).

The protein belongs to the RNA polymerase beta chain family. The RNAP catalytic core consists of 2 alpha, 1 beta, 1 beta' and 1 omega subunit. When a sigma factor is associated with the core the holoenzyme is formed, which can initiate transcription.

The catalysed reaction is RNA(n) + a ribonucleoside 5'-triphosphate = RNA(n+1) + diphosphate. Functionally, DNA-dependent RNA polymerase catalyzes the transcription of DNA into RNA using the four ribonucleoside triphosphates as substrates. The chain is DNA-directed RNA polymerase subunit beta from Staphylococcus aureus (strain MRSA252).